A 530-amino-acid chain; its full sequence is FSD1-like protein (530 aa).

M1 carries the post-translational modification N-acetylmethionine. Residues 102–141 adopt a coiled-coil conformation; sequence KQEQARKSQELQSQISQCNNALENSEELLEFATRSLDIKE. Residues 137–194 form the COS domain; it reads LDIKEPEEFSKAARQIKDRVTMASAFRLSLKPKVSDNMTHLMVDFSQERQMLQTLKFL. Positions 196–300 constitute a Fibronectin type-III domain; that stretch reads VPKAPEIDPV…DPVTLETKAL (105 aa). A B30.2/SPRY domain is found at 300 to 506; it reads LNFNLDNSSS…LSTGMQVPSA (207 aa). The tract at residues 322–366 is disordered; that stretch reads WDPTGGKGQESKIKGKENKGRSGTPSPKRTSVGSRPPAVRGSRDR. Residues 330-341 show a composition bias toward basic and acidic residues; it reads QESKIKGKENKG. The span at 342 to 354 shows a compositional bias: polar residues; sequence RSGTPSPKRTSVG. S520 and S523 each carry phosphoserine.

The protein is FSD1-like protein (FSD1L) of Homo sapiens (Human).